The primary structure comprises 85 residues: Cell division topological specificity factor (85 aa).

This sequence belongs to the MinE family.

Its function is as follows. Prevents the cell division inhibition by proteins MinC and MinD at internal division sites while permitting inhibition at polar sites. This ensures cell division at the proper site by restricting the formation of a division septum at the midpoint of the long axis of the cell. The chain is Cell division topological specificity factor from Dechloromonas aromatica (strain RCB).